The primary structure comprises 96 residues: MKCFAQIVVLLLVIAFSHGAVITGVCDRDAQCGSGTCCAASAFSRNIRFCVPLGNNGEECHPASHKVPYNGKRLSSLCPCNTGLTCPKSGEKFQCS.

Positions 1–19 (MKCFAQIVVLLLVIAFSHG) are cleaved as a signal peptide. Intrachain disulfides connect cysteine 26-cysteine 38, cysteine 32-cysteine 50, cysteine 37-cysteine 78, cysteine 60-cysteine 86, and cysteine 80-cysteine 95.

The protein belongs to the AVIT (prokineticin) family. In terms of tissue distribution, expressed by the skin glands.

Its subcellular location is the secreted. Its function is as follows. Potent agonist for both PKR1/PROKR1 and PKR2/PROKR2, and inducer of a potent and long-lasting hyperalgesia. Also potentiates capsaicin-induced TRPV1 current, when tested on DRG neurons. At subnanomolar concentrations, this protein both induces potent chemotaxis of macrophages and stimulates LPS-induced production of the pro-inflammatory cytokines IL-1 and IL-12. In vivo, potently stimulates the contraction of the guinea-pig gastrointestinal (GI) smooth muscle (nanomolar concentration). In Bombina maxima (Giant fire-bellied toad), this protein is Prokineticin Bm8-e.